The chain runs to 190 residues: Heme-binding protein 1 (190 aa).

This sequence belongs to the HEBP family. As to quaternary structure, monomer.

The protein resides in the cytoplasm. Functionally, may bind free porphyrinogens that may be present in the cell and thus facilitate removal of these potentially toxic compound. Binds with a high affinity to one molecule of heme or porphyrins. It binds metalloporphyrins, free porphyrins and N-methylprotoporphyrin with similar affinities. This Xenopus tropicalis (Western clawed frog) protein is Heme-binding protein 1 (hebp1).